The chain runs to 298 residues: Acetylglutamate kinase (298 aa).

Residues 61-62 (GG), Arg83, and Asn188 contribute to the substrate site.

This sequence belongs to the acetylglutamate kinase family. ArgB subfamily.

The protein resides in the cytoplasm. The enzyme catalyses N-acetyl-L-glutamate + ATP = N-acetyl-L-glutamyl 5-phosphate + ADP. The protein operates within amino-acid biosynthesis; L-arginine biosynthesis; N(2)-acetyl-L-ornithine from L-glutamate: step 2/4. Catalyzes the ATP-dependent phosphorylation of N-acetyl-L-glutamate. The protein is Acetylglutamate kinase of Syntrophobacter fumaroxidans (strain DSM 10017 / MPOB).